The following is a 296-amino-acid chain: NAD kinase (296 aa).

Asp-78 serves as the catalytic Proton acceptor. Residues 78 to 79 (DG), 152 to 153 (ND), Arg-180, Asp-182, and Gln-251 contribute to the NAD(+) site.

Belongs to the NAD kinase family. It depends on a divalent metal cation as a cofactor.

The protein localises to the cytoplasm. It carries out the reaction NAD(+) + ATP = ADP + NADP(+) + H(+). In terms of biological role, involved in the regulation of the intracellular balance of NAD and NADP, and is a key enzyme in the biosynthesis of NADP. Catalyzes specifically the phosphorylation on 2'-hydroxyl of the adenosine moiety of NAD to yield NADP. The sequence is that of NAD kinase from Neisseria meningitidis serogroup C (strain 053442).